Here is a 397-residue protein sequence, read N- to C-terminus: MDTLATSINQFALELSKKLAESAQGKNIFFSSWSISTSLAMVYLGTKGTTAAQMGQVLQFNRDQGVKSSPESEKKRKMEFNSSNSEEIHSDFHTLISEILKPNDDYLLKTANAIYGEKTYPFHNKYLEDMKTYFGAEPQSVNFVEASDQIRKEINSWVERQTEGKIQNLLPDDSVDSTTRMILVNALYFKGIWEHQFLVQNTTEKPFRINETTSKPVQMMFMKKKLQIFHIEKPQAVGLQLYYKSRDLSLLILLPEDINGLVQLEKDITYEKLNEWTSADMMELYEVQLHLPKFKLEDSYDLKSTLSSMGMSDAFSQSKADFSGMSSARNLFLSNVFHKAFVEINEQGTEAAAGTGSEIESRIRVPSIEFNANHPFLFFIRHNKTNSILFYGRLCSP.

A disordered region spans residues 62 to 85 (RDQGVKSSPESEKKRKMEFNSSNS). Basic and acidic residues predominate over residues 70-79 (PESEKKRKME). A Nuclear localization signal motif is present at residues 74–77 (KKRK).

The protein belongs to the serpin family. Ov-serpin subfamily.

It localises to the nucleus. The protein resides in the cytoplasm. In terms of biological role, protease inhibitor that may play a role in the regulation of protease activities during hematopoiesis and apoptosis induced by TNF. May regulate protease activities in the cytoplasm and in the nucleus. The polypeptide is Serpin B10 (SERPINB10) (Papio anubis (Olive baboon)).